A 350-amino-acid polypeptide reads, in one-letter code: MSKIRVLSVDDSALMRQIMTEIINSHSDMEMVATAPDPLVARDLIKKYNPDVLTLDVEMPRMDGIDFLEKLMRLRPMPVVMVSSLTGKGSEITLRALELGAVDFVTKPQLGIREGMLAYSEMIAEKIRHPSRAKLAAHTPLAAPDTLKAGPLLSSEKLLVIGASTGGTEAIRHVLQPLPLSSPGILITQHMPPGFTRSFAERLNKLCQISVKEAEDGERVPPGHAYIAPGDKHMELSRRRANYQIKIHDGPPVNRHRPSVDVLFHSVAKHAGRNAVGVILTGMGNDGAAGMLAMPIAGAWTIAQNEASCVVFGMPREAINMGGVSEVVDLSQVVSQQMLEKISAGQAIRI.

The region spanning 5-122 is the Response regulatory domain; the sequence is RVLSVDDSAL…REGMLAYSEM (118 aa). At D56 the chain carries 4-aspartylphosphate. The 187-residue stretch at 152 to 338 folds into the CheB-type methylesterase domain; sequence LLSSEKLLVI…DLSQVVSQQM (187 aa). Residues S164, H190, and D286 contribute to the active site.

It belongs to the CheB family. Phosphorylated by CheA. Phosphorylation of the N-terminal regulatory domain activates the methylesterase activity.

The protein localises to the cytoplasm. It catalyses the reaction [protein]-L-glutamate 5-O-methyl ester + H2O = L-glutamyl-[protein] + methanol + H(+). It carries out the reaction L-glutaminyl-[protein] + H2O = L-glutamyl-[protein] + NH4(+). In terms of biological role, involved in chemotaxis. Part of a chemotaxis signal transduction system that modulates chemotaxis in response to various stimuli. Catalyzes the demethylation of specific methylglutamate residues introduced into the chemoreceptors (methyl-accepting chemotaxis proteins or MCP) by CheR. Also mediates the irreversible deamidation of specific glutamine residues to glutamic acid. The protein is Protein-glutamate methylesterase/protein-glutamine glutaminase of Enterobacter cloacae.